The following is a 265-amino-acid chain: Undecaprenyl-diphosphatase (265 aa).

8 helical membrane passes run 1-21, 39-59, 86-106, 112-132, 140-160, 186-206, 219-239, and 244-264; these read MDIL…FLPI, QGLA…ILYF, WCII…GNFI, SVSV…FADA, LAQM…LAMI, FSFL…GLKL, VGVL…LSFI, and MLPF…LVWF.

The protein belongs to the UppP family.

It localises to the cell inner membrane. The enzyme catalyses di-trans,octa-cis-undecaprenyl diphosphate + H2O = di-trans,octa-cis-undecaprenyl phosphate + phosphate + H(+). Catalyzes the dephosphorylation of undecaprenyl diphosphate (UPP). Confers resistance to bacitracin. In Saccharophagus degradans (strain 2-40 / ATCC 43961 / DSM 17024), this protein is Undecaprenyl-diphosphatase.